The chain runs to 189 residues: uncharacterized protein (189 aa).

The protein belongs to the flavoredoxin family. FMN serves as cofactor.

This is an uncharacterized protein from Escherichia coli (strain K12).